The primary structure comprises 79 residues: MSRVCELTGKRAMVGNNVSHAMNKTKRKFNANLVKKRFFLPEEDRWVTLKVCTSALKDINKKGISAVIKEAKAKGFLQK.

The protein belongs to the bacterial ribosomal protein bL28 family.

The sequence is that of Large ribosomal subunit protein bL28 from Christiangramia forsetii (strain DSM 17595 / CGMCC 1.15422 / KT0803) (Gramella forsetii).